Here is a 430-residue protein sequence, read N- to C-terminus: Bifunctional protein GlmU (430 aa).

Positions Met-1–Lys-223 are pyrophosphorylase. UDP-N-acetyl-alpha-D-glucosamine-binding positions include Leu-8 to Gly-11, Lys-22, and Gly-81 to Thr-82. Asp-102 is a Mg(2+) binding site. UDP-N-acetyl-alpha-D-glucosamine-binding residues include Gly-135, Glu-149, Asn-164, and Asn-221. Mg(2+) is bound at residue Asn-221. The segment at Leu-224–Ala-244 is linker. The segment at Gly-245 to Lys-430 is N-acetyltransferase. UDP-N-acetyl-alpha-D-glucosamine-binding residues include Arg-308 and Lys-325. His-336 functions as the Proton acceptor in the catalytic mechanism. Residues Tyr-339 and Asn-350 each coordinate UDP-N-acetyl-alpha-D-glucosamine. Acetyl-CoA is bound by residues Ala-353, Asn-359–Tyr-360, Ser-378, Ala-396, and Arg-413.

In the N-terminal section; belongs to the N-acetylglucosamine-1-phosphate uridyltransferase family. This sequence in the C-terminal section; belongs to the transferase hexapeptide repeat family. As to quaternary structure, homotrimer. Mg(2+) serves as cofactor.

The protein localises to the cytoplasm. It carries out the reaction alpha-D-glucosamine 1-phosphate + acetyl-CoA = N-acetyl-alpha-D-glucosamine 1-phosphate + CoA + H(+). The catalysed reaction is N-acetyl-alpha-D-glucosamine 1-phosphate + UTP + H(+) = UDP-N-acetyl-alpha-D-glucosamine + diphosphate. The protein operates within nucleotide-sugar biosynthesis; UDP-N-acetyl-alpha-D-glucosamine biosynthesis; N-acetyl-alpha-D-glucosamine 1-phosphate from alpha-D-glucosamine 6-phosphate (route II): step 2/2. Its pathway is nucleotide-sugar biosynthesis; UDP-N-acetyl-alpha-D-glucosamine biosynthesis; UDP-N-acetyl-alpha-D-glucosamine from N-acetyl-alpha-D-glucosamine 1-phosphate: step 1/1. It participates in bacterial outer membrane biogenesis; LPS lipid A biosynthesis. Functionally, catalyzes the last two sequential reactions in the de novo biosynthetic pathway for UDP-N-acetylglucosamine (UDP-GlcNAc). The C-terminal domain catalyzes the transfer of acetyl group from acetyl coenzyme A to glucosamine-1-phosphate (GlcN-1-P) to produce N-acetylglucosamine-1-phosphate (GlcNAc-1-P), which is converted into UDP-GlcNAc by the transfer of uridine 5-monophosphate (from uridine 5-triphosphate), a reaction catalyzed by the N-terminal domain. This Sulfurovum sp. (strain NBC37-1) protein is Bifunctional protein GlmU.